Reading from the N-terminus, the 148-residue chain is NTR domain-containing protein (148 aa).

The first 26 residues, 1-26, serve as a signal peptide directing secretion; the sequence is MVCRFSYVQVVLILVVLSVIISWANA. 3 disulfides stabilise this stretch: Cys-27/Cys-96, Cys-29/Cys-122, and Cys-40/Cys-146. The 120-residue stretch at 27-146 folds into the NTR domain; sequence CSCFPPDETR…LQLFNDPQWC (120 aa).

In terms of tissue distribution, prismatic layer of shell (at protein level). Expressed primarily in the mantle with highest level in the mantle edge and lower level in the mantle pallium.

The protein localises to the secreted. In Margaritifera margaritifera (Freshwater pearl mussel), this protein is NTR domain-containing protein.